Here is a 449-residue protein sequence, read N- to C-terminus: CBL-interacting protein kinase 31 (449 aa).

Residues Y20–F275 enclose the Protein kinase domain. ATP is bound by residues I26 to V34 and K49. Residue D143 is the Proton acceptor of the active site. The interval D161–E190 is activation loop. The 25-residue stretch at D313 to E337 folds into the NAF domain.

It belongs to the protein kinase superfamily. CAMK Ser/Thr protein kinase family. SNF1 subfamily. In terms of assembly, may interact with CBL3. It depends on Mn(2+) as a cofactor. Post-translationally, autophosphorylated. In terms of tissue distribution, highly expressed in leaf blade and leaf sheath, but not in other tissues.

The catalysed reaction is L-seryl-[protein] + ATP = O-phospho-L-seryl-[protein] + ADP + H(+). It carries out the reaction L-threonyl-[protein] + ATP = O-phospho-L-threonyl-[protein] + ADP + H(+). Involved in cold stress tolerance. CIPK serine-threonine protein kinases interact with CBL proteins. Binding of a CBL protein to the regulatory NAF domain of CIPK protein lead to the activation of the kinase in a calcium-dependent manner. In Oryza sativa subsp. japonica (Rice), this protein is CBL-interacting protein kinase 31 (CIPK31).